The primary structure comprises 1390 residues: Contactin (1390 aa).

The signal sequence occupies residues Met1–Gly18. The interval Ser25–Asn67 is disordered. A compositionally biased stretch (polar residues) spans Tyr58–Asn67. Ig-like C2-type domains follow at residues Pro362–Asn463, Met468–Thr561, Pro576–Asn656, Pro661–Ser745, Pro756–Ile843, and Ile848–Ser939. N-linked (GlcNAc...) asparagine glycosylation occurs at Asn369. 4 disulfides stabilise this stretch: Cys388-Cys446, Cys489-Cys540, Cys593-Cys640, and Cys682-Cys734. N-linked (GlcNAc...) asparagine glycosylation is found at Asn537, Asn604, Asn629, Asn691, and Asn774. 2 cysteine pairs are disulfide-bonded: Cys779-Cys827 and Cys870-Cys923. 3 N-linked (GlcNAc...) asparagine glycosylation sites follow: Asn912, Asn986, and Asn991. 4 Fibronectin type-III domains span residues Ala946–Asp1048, Ala1053–Asp1151, Ala1156–Lys1254, and Pro1259–Thr1357. 3 N-linked (GlcNAc...) asparagine glycosylation sites follow: Asn1166, Asn1171, and Asn1307. A lipid anchor (GPI-anchor amidated alanine) is attached at Ala1362. The propeptide at Asn1363–Gln1390 is removed in mature form.

The protein belongs to the immunoglobulin superfamily. Contactin family. Forms a complex with Nrg and Nrx. Forms a complex composed of septa junction proteins Nrx-IV/Nrx, Tsf2/MTf, Cont and Nrg during late embryogenesis. In terms of processing, N-glycosylated. Expressed in ectodermally derived epithelial cells from stage 12. All these tissues, such as epidermis, hindgut, foregut, salivary glands and trachea, which contain pleated septate junctions. Expressed by ectodermally derived epithelial cells and along peripheral nerves. Not present in midline glial cells. Expressed in epithelial cells and glial cells of peripheral nerves.

Its subcellular location is the cell membrane. The protein resides in the cell junction. The protein localises to the septate junction. Its function is as follows. Required for organization of septate junctions and paracellular barrier functions. Septate junctions, which are the equivalent of vertebrates tight junctions, are characterized by regular arrays of transverse structures that span the intermembrane space and form a physical barrier to diffusion. The chain is Contactin (Cont) from Drosophila melanogaster (Fruit fly).